The sequence spans 149 residues: Transthyretin (149 aa).

An N-terminal signal peptide occupies residues 1-20; that stretch reads MAFHSLLLLCLAGLAFVSET. Sulfocysteine is present on Cys-32. Residue Lys-37 coordinates L-thyroxine. A 4-carboxyglutamate modification is found at Glu-64. Glu-76 and Ser-139 together coordinate L-thyroxine.

It belongs to the transthyretin family. As to quaternary structure, homotetramer. Dimer of dimers. In the homotetramer, subunits assemble around a central channel that can accommodate two ligand molecules. Interacts with RBP4. In terms of processing, sulfonation of the reactive cysteine Cys-32 enhances the stability of the native conformation of TTR, avoiding misassembly of the protein leading to amyloid formation.

Its subcellular location is the secreted. Its function is as follows. Thyroid hormone-binding protein. Probably transports thyroxine from the bloodstream to the brain. This is Transthyretin (TTR) from Notamacropus eugenii (Tammar wallaby).